Consider the following 152-residue polypeptide: Protein-export protein SecB (152 aa).

It belongs to the SecB family. In terms of assembly, homotetramer, a dimer of dimers. One homotetramer interacts with 1 SecA dimer.

It localises to the cytoplasm. Functionally, one of the proteins required for the normal export of preproteins out of the cell cytoplasm. It is a molecular chaperone that binds to a subset of precursor proteins, maintaining them in a translocation-competent state. It also specifically binds to its receptor SecA. The sequence is that of Protein-export protein SecB from Rickettsia akari (strain Hartford).